A 113-amino-acid polypeptide reads, in one-letter code: Venom protein 184 (113 aa).

An N-terminal signal peptide occupies residues 1–21 (MKTTLIFCILGIVIPTAVVSS).

Contains 3 disulfide bonds. As to expression, expressed by the venom gland.

Its subcellular location is the secreted. The sequence is that of Venom protein 184 from Lychas mucronatus (Chinese swimming scorpion).